Consider the following 138-residue polypeptide: Large ribosomal subunit protein uL16 (138 aa).

Residues 1 to 22 form a disordered region; that stretch reads MQQPARTKYRKQQKGRNKGIAT. Residues 7 to 17 show a composition bias toward basic residues; the sequence is TKYRKQQKGRN.

It belongs to the universal ribosomal protein uL16 family. As to quaternary structure, part of the 50S ribosomal subunit.

Its function is as follows. Binds 23S rRNA and is also seen to make contacts with the A and possibly P site tRNAs. The chain is Large ribosomal subunit protein uL16 from Nitrosospira multiformis (strain ATCC 25196 / NCIMB 11849 / C 71).